A 237-amino-acid polypeptide reads, in one-letter code: Arginine-binding periplasmic protein (237 aa).

An N-terminal signal peptide occupies residues Met1 to Ala18.

It belongs to the bacterial solute-binding protein 3 family.

The protein localises to the periplasm. In terms of biological role, binds arginine; part of the arginine periplasmic transport system. The polypeptide is Arginine-binding periplasmic protein (lapT) (Mannheimia haemolytica (Pasteurella haemolytica)).